The following is a 297-amino-acid chain: NADH-ubiquinone oxidoreductase chain 1 (297 aa).

Transmembrane regions (helical) follow at residues 1–21 (MKSL…TLAE), 34–54 (PNHV…KLIL), 66–86 (WLFV…WLVI), 99–119 (LSIL…IYTG), 139–159 (VSYE…GATL), 170–190 (GTVL…AALA), 206–228 (LVAG…GEYA), 235–257 (TVLN…IWIR), and 277–297 (LPFL…LDLF).

Belongs to the complex I subunit 1 family.

Its subcellular location is the mitochondrion inner membrane. It carries out the reaction a ubiquinone + NADH + 5 H(+)(in) = a ubiquinol + NAD(+) + 4 H(+)(out). Functionally, core subunit of the mitochondrial membrane respiratory chain NADH dehydrogenase (Complex I) that is believed to belong to the minimal assembly required for catalysis. Complex I functions in the transfer of electrons from NADH to the respiratory chain. The immediate electron acceptor for the enzyme is believed to be ubiquinone. The sequence is that of NADH-ubiquinone oxidoreductase chain 1 from Hyaloraphidium curvatum (Lower fungus).